A 198-amino-acid chain; its full sequence is Secreted RxLR effector protein PITG_22926 (198 aa).

The N-terminal stretch at 1 to 20 is a signal peptide; that stretch reads MLRSFLLIVATVSLFGQCKP. The RxLR-dEER signature appears at 43 to 52; sequence RFLRTNDEER.

The protein belongs to the RxLR effector family. As to quaternary structure, interacts with host MAP3Kbeta2 in the nucleoplasm.

The protein resides in the secreted. It localises to the host nucleus. Its subcellular location is the host nucleolus. In terms of biological role, secreted effector that promotes P.infestans colonization of plant host. Specifically suppresses Avr4/Cf4- and AvrPto/Pto-triggered cell death. Targets the potato MAP3Kbeta2 kinase, a positive regulator of cell death associated with plant immunity, and perturbs signaling pathways triggered by MAP3Kbeta2. This is Secreted RxLR effector protein PITG_22926 from Phytophthora infestans (strain T30-4) (Potato late blight agent).